Consider the following 203-residue polypeptide: Leucyl/phenylalanyl-tRNA--protein transferase (203 aa).

It belongs to the L/F-transferase family.

It localises to the cytoplasm. It catalyses the reaction N-terminal L-lysyl-[protein] + L-leucyl-tRNA(Leu) = N-terminal L-leucyl-L-lysyl-[protein] + tRNA(Leu) + H(+). The catalysed reaction is N-terminal L-arginyl-[protein] + L-leucyl-tRNA(Leu) = N-terminal L-leucyl-L-arginyl-[protein] + tRNA(Leu) + H(+). It carries out the reaction L-phenylalanyl-tRNA(Phe) + an N-terminal L-alpha-aminoacyl-[protein] = an N-terminal L-phenylalanyl-L-alpha-aminoacyl-[protein] + tRNA(Phe). Its function is as follows. Functions in the N-end rule pathway of protein degradation where it conjugates Leu, Phe and, less efficiently, Met from aminoacyl-tRNAs to the N-termini of proteins containing an N-terminal arginine or lysine. The protein is Leucyl/phenylalanyl-tRNA--protein transferase of Chelativorans sp. (strain BNC1).